A 154-amino-acid chain; its full sequence is Myoglobin (154 aa).

The region spanning 2–148 (GLSDQEWQQV…FRNDMASKYK (147 aa)) is the Globin domain. Histidine 65 serves as a coordination point for nitrite. O2 is bound at residue histidine 65. Position 94 (histidine 94) interacts with heme b.

Belongs to the globin family. In terms of assembly, monomeric.

The protein localises to the cytoplasm. It is found in the sarcoplasm. It carries out the reaction Fe(III)-heme b-[protein] + nitric oxide + H2O = Fe(II)-heme b-[protein] + nitrite + 2 H(+). It catalyses the reaction H2O2 + AH2 = A + 2 H2O. Monomeric heme protein which primary function is to store oxygen and facilitate its diffusion within muscle tissues. Reversibly binds oxygen through a pentacoordinated heme iron and enables its timely and efficient release as needed during periods of heightened demand. Depending on the oxidative conditions of tissues and cells, and in addition to its ability to bind oxygen, it also has a nitrite reductase activity whereby it regulates the production of bioactive nitric oxide. Under stress conditions, like hypoxia and anoxia, it also protects cells against reactive oxygen species thanks to its pseudoperoxidase activity. The chain is Myoglobin (MB) from Anas poecilorhyncha (Indian spot-billed duck).